The following is a 251-amino-acid chain: uncharacterized protein (251 aa).

The first 18 residues, 1–18 (MKILIILSIILCSLFGRA), serve as a signal peptide directing secretion.

It belongs to the MlaA family.

This is an uncharacterized protein from Rickettsia prowazekii (strain Madrid E).